Here is a 1057-residue protein sequence, read N- to C-terminus: Carbamoyl phosphate synthase large chain (1057 aa).

A carboxyphosphate synthetic domain region spans residues 1-401 (MPKRDDIQTI…SLLKAIRSLE (401 aa)). Arginine 129, arginine 169, glycine 175, glycine 176, lysine 208, isoleucine 210, glutamate 215, glycine 241, isoleucine 242, histidine 243, glutamine 284, and glutamate 298 together coordinate ATP. Residues 133–327 (RSLMNDLNVP…IAKLAAKIAV (195 aa)) form the ATP-grasp 1 domain. Positions 284, 298, and 300 each coordinate Mg(2+). Mn(2+)-binding residues include glutamine 284, glutamate 298, and asparagine 300. The interval 402 to 546 (YGVHHLGLPN…YGTYETENES (145 aa)) is oligomerization domain. Positions 547-929 (IVTDKEKILV…ALYKGLTGSG (383 aa)) are carbamoyl phosphate synthetic domain. The region spanning 671 to 861 (EALLHTIDVP…MAQLAMQAIM (191 aa)) is the ATP-grasp 2 domain. Positions 707, 746, 748, 752, 777, 778, 779, 780, 820, and 832 each coordinate ATP. Mg(2+)-binding residues include glutamine 820, glutamate 832, and asparagine 834. Mn(2+)-binding residues include glutamine 820, glutamate 832, and asparagine 834. Residues 930 to 1057 (VEVKDHGTVL…ESMTFSMRTM (128 aa)) enclose the MGS-like domain. Residues 930–1057 (VEVKDHGTVL…ESMTFSMRTM (128 aa)) form an allosteric domain region.

The protein belongs to the CarB family. As to quaternary structure, composed of two chains; the small (or glutamine) chain promotes the hydrolysis of glutamine to ammonia, which is used by the large (or ammonia) chain to synthesize carbamoyl phosphate. Tetramer of heterodimers (alpha,beta)4. Mg(2+) serves as cofactor. Mn(2+) is required as a cofactor.

It carries out the reaction hydrogencarbonate + L-glutamine + 2 ATP + H2O = carbamoyl phosphate + L-glutamate + 2 ADP + phosphate + 2 H(+). It catalyses the reaction hydrogencarbonate + NH4(+) + 2 ATP = carbamoyl phosphate + 2 ADP + phosphate + 2 H(+). Its pathway is amino-acid biosynthesis; L-arginine biosynthesis; carbamoyl phosphate from bicarbonate: step 1/1. The protein operates within pyrimidine metabolism; UMP biosynthesis via de novo pathway; (S)-dihydroorotate from bicarbonate: step 1/3. Functionally, large subunit of the glutamine-dependent carbamoyl phosphate synthetase (CPSase). CPSase catalyzes the formation of carbamoyl phosphate from the ammonia moiety of glutamine, carbonate, and phosphate donated by ATP, constituting the first step of 2 biosynthetic pathways, one leading to arginine and/or urea and the other to pyrimidine nucleotides. The large subunit (synthetase) binds the substrates ammonia (free or transferred from glutamine from the small subunit), hydrogencarbonate and ATP and carries out an ATP-coupled ligase reaction, activating hydrogencarbonate by forming carboxy phosphate which reacts with ammonia to form carbamoyl phosphate. This Staphylococcus haemolyticus (strain JCSC1435) protein is Carbamoyl phosphate synthase large chain.